A 373-amino-acid polypeptide reads, in one-letter code: Histidinol-phosphate aminotransferase (373 aa).

An N6-(pyridoxal phosphate)lysine modification is found at K231.

It belongs to the class-II pyridoxal-phosphate-dependent aminotransferase family. Histidinol-phosphate aminotransferase subfamily. Pyridoxal 5'-phosphate is required as a cofactor.

The enzyme catalyses L-histidinol phosphate + 2-oxoglutarate = 3-(imidazol-4-yl)-2-oxopropyl phosphate + L-glutamate. It participates in amino-acid biosynthesis; L-histidine biosynthesis; L-histidine from 5-phospho-alpha-D-ribose 1-diphosphate: step 7/9. The protein is Histidinol-phosphate aminotransferase (hisC) of Methanocaldococcus jannaschii (strain ATCC 43067 / DSM 2661 / JAL-1 / JCM 10045 / NBRC 100440) (Methanococcus jannaschii).